Consider the following 76-residue polypeptide: Small ribosomal subunit protein bS18 (76 aa).

This sequence belongs to the bacterial ribosomal protein bS18 family. In terms of assembly, part of the 30S ribosomal subunit. Forms a tight heterodimer with protein bS6.

In terms of biological role, binds as a heterodimer with protein bS6 to the central domain of the 16S rRNA, where it helps stabilize the platform of the 30S subunit. The protein is Small ribosomal subunit protein bS18 of Pseudomonas fluorescens (strain ATCC BAA-477 / NRRL B-23932 / Pf-5).